Here is a 156-residue protein sequence, read N- to C-terminus: Small ribosomal subunit protein uS7 (156 aa).

This sequence belongs to the universal ribosomal protein uS7 family. As to quaternary structure, part of the 30S ribosomal subunit. Contacts proteins S9 and S11.

One of the primary rRNA binding proteins, it binds directly to 16S rRNA where it nucleates assembly of the head domain of the 30S subunit. Is located at the subunit interface close to the decoding center, probably blocks exit of the E-site tRNA. This chain is Small ribosomal subunit protein uS7, found in Rhizobium rhizogenes (strain K84 / ATCC BAA-868) (Agrobacterium radiobacter).